Here is a 147-residue protein sequence, read N- to C-terminus: Small ribosomal subunit protein uS12 (147 aa).

It belongs to the universal ribosomal protein uS12 family. As to quaternary structure, part of the 30S ribosomal subunit.

In terms of biological role, with S4 and S5 plays an important role in translational accuracy. Located at the interface of the 30S and 50S subunits. This Saccharolobus solfataricus (strain ATCC 35092 / DSM 1617 / JCM 11322 / P2) (Sulfolobus solfataricus) protein is Small ribosomal subunit protein uS12.